A 260-amino-acid polypeptide reads, in one-letter code: 1-(5-phosphoribosyl)-5-[(5-phosphoribosylamino)methylideneamino] imidazole-4-carboxamide isomerase (260 aa).

Aspartate 8 serves as the catalytic Proton acceptor. Catalysis depends on aspartate 130, which acts as the Proton donor.

This sequence belongs to the HisA/HisF family.

It is found in the cytoplasm. The catalysed reaction is 1-(5-phospho-beta-D-ribosyl)-5-[(5-phospho-beta-D-ribosylamino)methylideneamino]imidazole-4-carboxamide = 5-[(5-phospho-1-deoxy-D-ribulos-1-ylimino)methylamino]-1-(5-phospho-beta-D-ribosyl)imidazole-4-carboxamide. Its pathway is amino-acid biosynthesis; L-histidine biosynthesis; L-histidine from 5-phospho-alpha-D-ribose 1-diphosphate: step 4/9. The chain is 1-(5-phosphoribosyl)-5-[(5-phosphoribosylamino)methylideneamino] imidazole-4-carboxamide isomerase from Chlorobaculum tepidum (strain ATCC 49652 / DSM 12025 / NBRC 103806 / TLS) (Chlorobium tepidum).